Reading from the N-terminus, the 147-residue chain is NADH-ubiquinone oxidoreductase chain 3 (147 aa).

Transmembrane regions (helical) follow at residues 6–26 (LFIL…LVFA), 60–80 (AICF…VGSL), and 84–104 (TFYS…GFVF).

Belongs to the complex I subunit 3 family.

It is found in the mitochondrion membrane. The catalysed reaction is a ubiquinone + NADH + 5 H(+)(in) = a ubiquinol + NAD(+) + 4 H(+)(out). Functionally, core subunit of the mitochondrial membrane respiratory chain NADH dehydrogenase (Complex I) that is believed to belong to the minimal assembly required for catalysis. Complex I functions in the transfer of electrons from NADH to the respiratory chain. The immediate electron acceptor for the enzyme is believed to be ubiquinone. The protein is NADH-ubiquinone oxidoreductase chain 3 (ndh-3) of Neurospora crassa (strain ATCC 24698 / 74-OR23-1A / CBS 708.71 / DSM 1257 / FGSC 987).